A 686-amino-acid polypeptide reads, in one-letter code: Ovotransferrin (686 aa).

Transferrin-like domains follow at residues 7–333 (VRWC…SLRK) and 345–670 (IQWC…SLNT). Intrachain disulfides connect Cys10–Cys45, Cys20–Cys36, Cys115–Cys197, Cys160–Cys174, Cys171–Cys182, and Cys228–Cys242. A connecting region region spans residues 333 to 341 (KDQLTVGPR). 9 disulfides stabilise this stretch: Cys348–Cys380, Cys358–Cys371, Cys405–Cys680, Cys421–Cys643, Cys454–Cys530, Cys478–Cys671, Cys488–Cys502, Cys499–Cys513, and Cys570–Cys584. Asn473 carries N-linked (GlcNAc...) asparagine glycosylation. Asn548 carries an N-linked (GlcNAc...) asparagine glycan.

Belongs to the transferrin family. As to quaternary structure, monomer.

Its subcellular location is the secreted. Its function is as follows. Transferrins are iron binding transport proteins which can bind two Fe(3+) ions in association with the binding of an anion, usually bicarbonate. It is responsible for the transport of iron from sites of absorption and heme degradation to those of storage and utilization. Serum transferrin may also have a further role in stimulating cell proliferation. In terms of biological role, ovotransferrin has a bacteriostatic function. Its concentration in avian egg is the highest concentration of any transferrin in vivo. The chain is Ovotransferrin from Anas platyrhynchos (Mallard).